The following is a 538-amino-acid chain: Guanine nucleotide-binding protein-like 3 (538 aa).

Over residues 1-45 the composition is skewed to basic residues; sequence MKRPKLKKASKRMTCHKRYKIQKKVREHHRKLRKEAKKRGHKKPR. 2 disordered regions span residues 1–57 and 69–126; these read MKRP…APFK and QQLE…NPKK. The tract at residues 2-46 is basic; it reads KRPKLKKASKRMTCHKRYKIQKKVREHHRKLRKEAKKRGHKKPRK. Residues 54–95 are a coiled coil; that stretch reads APFKEALLREAELRKQQLEELKQQQKLDRQKEQERKRKLEVS. Residues 69–93 show a composition bias toward basic and acidic residues; that stretch reads QQLEELKQQQKLDRQKEQERKRKLE. K79 carries the N6-acetyllysine modification. K91 is covalently cross-linked (Glycyl lysine isopeptide (Lys-Gly) (interchain with G-Cter in SUMO2)). A phosphoserine mark is found at S95 and S101. Positions 114–126 are enriched in basic residues; sequence RKKAKAGKQNPKK. Residues 129–307 enclose the CP-type G domain; sequence CQELKKVIEA…IIDSPCLIIS (179 aa). Residue 176–179 coordinates GTP; sequence NKSD. Residues K177, K248, K262, and K270 each participate in a glycyl lysine isopeptide (Lys-Gly) (interchain with G-Cter in SUMO2) cross-link. 256-263 contributes to the GTP binding site; sequence GFPNVGKS. The segment at 277–451 is intermediate; the sequence is VGISMGLTRS…HLTNRILFRS (175 aa). A GTP-binding site is contributed by 300-303; the sequence is DSPC. The segment covering 460-475 has biased composition (basic and acidic residues); sequence DEKDIVEESPRQTEDK. Residues 460–532 are acidic; sequence DEKDIVEESP…RASQEDETYD (73 aa). Residues 460–538 form a disordered region; it reads DEKDIVEESP…ETYDFTTDYI (79 aa). A phosphoserine mark is found at S493, S505, and S518. Polar residues predominate over residues 506–518; it reads PEQSTAGKPSDGS.

The protein belongs to the TRAFAC class YlqF/YawG GTPase family. In terms of assembly, interacts with MDM2; this interaction stabilizes MDM2. Interaction with MDM2 occurs in the nucleoplasm and is triggered by a nucleolar release mechanism, such as mitosis-induced nucleolar disassembly. Indirectly interacts with TP53, via MDM2-binding. Interacts with TSC22D1 isoform 2. Expressed in the adult bone marrow population that is enriched in hematopoietic stem cells.

The protein resides in the nucleus. It localises to the nucleolus. Its function is as follows. May be required to maintain the proliferative capacity of stem cells. Stabilizes MDM2 by preventing its ubiquitination, and hence proteasomal degradation. In Mus musculus (Mouse), this protein is Guanine nucleotide-binding protein-like 3 (Gnl3).